A 135-amino-acid polypeptide reads, in one-letter code: Aspartate 1-decarboxylase (135 aa).

The active-site Schiff-base intermediate with substrate; via pyruvic acid is Ser-25. Ser-25 carries the post-translational modification Pyruvic acid (Ser). Thr-57 serves as a coordination point for substrate. Tyr-58 acts as the Proton donor in catalysis. Gly-73 to Ala-75 lines the substrate pocket.

This sequence belongs to the PanD family. As to quaternary structure, heterooctamer of four alpha and four beta subunits. The cofactor is pyruvate. In terms of processing, is synthesized initially as an inactive proenzyme, which is activated by self-cleavage at a specific serine bond to produce a beta-subunit with a hydroxyl group at its C-terminus and an alpha-subunit with a pyruvoyl group at its N-terminus.

The protein localises to the cytoplasm. The catalysed reaction is L-aspartate + H(+) = beta-alanine + CO2. Its pathway is cofactor biosynthesis; (R)-pantothenate biosynthesis; beta-alanine from L-aspartate: step 1/1. In terms of biological role, catalyzes the pyruvoyl-dependent decarboxylation of aspartate to produce beta-alanine. The chain is Aspartate 1-decarboxylase from Mycolicibacterium vanbaalenii (strain DSM 7251 / JCM 13017 / BCRC 16820 / KCTC 9966 / NRRL B-24157 / PYR-1) (Mycobacterium vanbaalenii).